A 326-amino-acid polypeptide reads, in one-letter code: 3-methyl-2-oxobutanoate hydroxymethyltransferase 1 (326 aa).

Mg(2+)-binding residues include aspartate 52, aspartate 91, and glutamate 122. 3-methyl-2-oxobutanoate contacts are provided by residues 52–53 (DS) and aspartate 91. Glutamate 189 acts as the Proton acceptor in catalysis.

It belongs to the PanB family. In terms of assembly, homodecamer; pentamer of dimers. Requires Mg(2+) as cofactor.

Its subcellular location is the cytoplasm. It catalyses the reaction 3-methyl-2-oxobutanoate + (6R)-5,10-methylene-5,6,7,8-tetrahydrofolate + H2O = 2-dehydropantoate + (6S)-5,6,7,8-tetrahydrofolate. The protein operates within cofactor biosynthesis; (R)-pantothenate biosynthesis; (R)-pantoate from 3-methyl-2-oxobutanoate: step 1/2. Catalyzes the reversible reaction in which hydroxymethyl group from 5,10-methylenetetrahydrofolate is transferred onto alpha-ketoisovalerate to form ketopantoate. The chain is 3-methyl-2-oxobutanoate hydroxymethyltransferase 1 from Bradyrhizobium diazoefficiens (strain JCM 10833 / BCRC 13528 / IAM 13628 / NBRC 14792 / USDA 110).